The sequence spans 630 residues: Kelch-like protein 14 (630 aa).

The region spanning 33–153 (CDVTLTAQGQ…LYTANVTLSL (121 aa)) is the BTB domain. Residues 69–117 (GGGVGGQDGLGAPKDQQQQQQPQQQPPQQQQPPPQEEPGTPSSSPDDKL) are disordered. The segment covering 84 to 96 (QQQQQQPQQQPPQ) has biased composition (low complexity). The region spanning 212–281 (VEDVLLLNFE…PAPELVERVQ (70 aa)) is the BACK domain. Kelch repeat units follow at residues 325 to 374 (MLLL…EVEN), 375 to 426 (FLFV…RLDK), 427 to 473 (HLYV…VHNG), 475 to 520 (IYIS…VMND), 522 to 572 (LYAI…VLDD), and 574 to 622 (IYLV…TVIL).

As to quaternary structure, interacts with TOR1A. Expressed in the brain, primarily in neurons. In the cerebral cortex, mostly expressed in layers I and II (at protein level). Also observed in some neurons of the corpus striatum (at protein level). Expressed at high levels in the hippocampus, including in pyramidal cells of the CA1 and CA3 layers (at protein level). In the cerebellum, expression in Purkinje cells is higher than in granular cells (at protein level). Also detected in the medial septum, ventral pallidum, thalamus, hypothalamus, amygdala, inferior colliculi, locus caeruleus, peripyramidal nucleus, raphe nucleus, reticular formation, spinal trigeminal nucleus, and vestibular nuclei (at protein level). Low expression, if any, in glial cells (at protein level). Not observed in the corpus callosum.

It is found in the cytoplasm. The protein localises to the cytosol. The protein resides in the endoplasmic reticulum membrane. This is Kelch-like protein 14 (Klhl14) from Mus musculus (Mouse).